We begin with the raw amino-acid sequence, 164 residues long: Arginine repressor (164 aa).

This sequence belongs to the ArgR family.

The protein localises to the cytoplasm. It participates in amino-acid biosynthesis; L-arginine biosynthesis [regulation]. Regulates arginine biosynthesis genes. The chain is Arginine repressor from Thermus thermophilus (strain ATCC BAA-163 / DSM 7039 / HB27).